A 486-amino-acid chain; its full sequence is Probable cytosol aminopeptidase (486 aa).

Positions 256 and 261 each coordinate Mn(2+). Lysine 268 is an active-site residue. Mn(2+) contacts are provided by aspartate 280, aspartate 339, and glutamate 341. Arginine 343 is an active-site residue.

This sequence belongs to the peptidase M17 family. It depends on Mn(2+) as a cofactor.

The protein localises to the cytoplasm. It catalyses the reaction Release of an N-terminal amino acid, Xaa-|-Yaa-, in which Xaa is preferably Leu, but may be other amino acids including Pro although not Arg or Lys, and Yaa may be Pro. Amino acid amides and methyl esters are also readily hydrolyzed, but rates on arylamides are exceedingly low.. The enzyme catalyses Release of an N-terminal amino acid, preferentially leucine, but not glutamic or aspartic acids.. Its function is as follows. Presumably involved in the processing and regular turnover of intracellular proteins. Catalyzes the removal of unsubstituted N-terminal amino acids from various peptides. The sequence is that of Probable cytosol aminopeptidase from Synechococcus sp. (strain ATCC 27144 / PCC 6301 / SAUG 1402/1) (Anacystis nidulans).